A 288-amino-acid polypeptide reads, in one-letter code: MLFKDQLFLASQYAAPHHLVSRLMGLAADCRTPAIKNWMISRFVRRYGVDMSEALVQDPLAYDTFNQFFTRKLRADARPLDTEPGAVLCPADGAISQLGPIEHGRIFQAKGHSYSLTSLLGGDPARAEPFMGGDFATIYLSPRDYHRVHMPCAGTLREMVHVPGRLFSVNPLTATHVPELFARNERVACLFDTEYGPMAMVLVGAMIVASIETAWAGLVTPHKRQIRAQRYDEAARAPIHLDKGAEMGLFKLGSTVIVLFGPGRVRWTDTPSVRGPVRMGELLALPKA.

Catalysis depends on charge relay system; for autoendoproteolytic cleavage activity residues Asp-92, His-149, and Ser-254. Residue Ser-254 is the Schiff-base intermediate with substrate; via pyruvic acid; for decarboxylase activity of the active site. Ser-254 carries the pyruvic acid (Ser); by autocatalysis modification.

Belongs to the phosphatidylserine decarboxylase family. PSD-B subfamily. Prokaryotic type I sub-subfamily. In terms of assembly, heterodimer of a large membrane-associated beta subunit and a small pyruvoyl-containing alpha subunit. Pyruvate is required as a cofactor. Is synthesized initially as an inactive proenzyme. Formation of the active enzyme involves a self-maturation process in which the active site pyruvoyl group is generated from an internal serine residue via an autocatalytic post-translational modification. Two non-identical subunits are generated from the proenzyme in this reaction, and the pyruvate is formed at the N-terminus of the alpha chain, which is derived from the carboxyl end of the proenzyme. The autoendoproteolytic cleavage occurs by a canonical serine protease mechanism, in which the side chain hydroxyl group of the serine supplies its oxygen atom to form the C-terminus of the beta chain, while the remainder of the serine residue undergoes an oxidative deamination to produce ammonia and the pyruvoyl prosthetic group on the alpha chain. During this reaction, the Ser that is part of the protease active site of the proenzyme becomes the pyruvoyl prosthetic group, which constitutes an essential element of the active site of the mature decarboxylase.

The protein resides in the cell membrane. The enzyme catalyses a 1,2-diacyl-sn-glycero-3-phospho-L-serine + H(+) = a 1,2-diacyl-sn-glycero-3-phosphoethanolamine + CO2. It participates in phospholipid metabolism; phosphatidylethanolamine biosynthesis; phosphatidylethanolamine from CDP-diacylglycerol: step 2/2. Functionally, catalyzes the formation of phosphatidylethanolamine (PtdEtn) from phosphatidylserine (PtdSer). The chain is Phosphatidylserine decarboxylase proenzyme from Bordetella petrii (strain ATCC BAA-461 / DSM 12804 / CCUG 43448).